The following is a 134-amino-acid chain: Postmeiotic segregation increased 2-like protein 5 (134 aa).

Belongs to the DNA mismatch repair MutL/HexB family.

The sequence is that of Postmeiotic segregation increased 2-like protein 5 (PMS2P5) from Homo sapiens (Human).